We begin with the raw amino-acid sequence, 134 residues long: ATP synthase epsilon chain (134 aa).

The protein belongs to the ATPase epsilon chain family. In terms of assembly, F-type ATPases have 2 components, CF(1) - the catalytic core - and CF(0) - the membrane proton channel. CF(1) has five subunits: alpha(3), beta(3), gamma(1), delta(1), epsilon(1). CF(0) has three main subunits: a, b and c.

The protein localises to the cellular thylakoid membrane. Produces ATP from ADP in the presence of a proton gradient across the membrane. In Prochlorococcus marinus (strain MIT 9312), this protein is ATP synthase epsilon chain.